A 417-amino-acid polypeptide reads, in one-letter code: Multifunctional CCA protein (417 aa).

Residues G8 and R11 each coordinate ATP. The CTP site is built by G8 and R11. The Mg(2+) site is built by D21 and D23. Residues R91, R143, and R146 each contribute to the ATP site. CTP-binding residues include R91, R143, and R146. The region spanning 232-333 is the HD domain; sequence TGVHVMMVVD…VRLFERSDAL (102 aa).

Belongs to the tRNA nucleotidyltransferase/poly(A) polymerase family. Bacterial CCA-adding enzyme type 1 subfamily. Monomer. Can also form homodimers and oligomers. Mg(2+) is required as a cofactor. It depends on Ni(2+) as a cofactor.

It carries out the reaction a tRNA precursor + 2 CTP + ATP = a tRNA with a 3' CCA end + 3 diphosphate. It catalyses the reaction a tRNA with a 3' CCA end + 2 CTP + ATP = a tRNA with a 3' CCACCA end + 3 diphosphate. In terms of biological role, catalyzes the addition and repair of the essential 3'-terminal CCA sequence in tRNAs without using a nucleic acid template. Adds these three nucleotides in the order of C, C, and A to the tRNA nucleotide-73, using CTP and ATP as substrates and producing inorganic pyrophosphate. tRNA 3'-terminal CCA addition is required both for tRNA processing and repair. Also involved in tRNA surveillance by mediating tandem CCA addition to generate a CCACCA at the 3' terminus of unstable tRNAs. While stable tRNAs receive only 3'-terminal CCA, unstable tRNAs are marked with CCACCA and rapidly degraded. The protein is Multifunctional CCA protein of Paraburkholderia phymatum (strain DSM 17167 / CIP 108236 / LMG 21445 / STM815) (Burkholderia phymatum).